A 341-amino-acid chain; its full sequence is Tyrosine recombinase XerC (341 aa).

The Core-binding (CB) domain occupies 14-105; sequence PDAAEALERW…GVRSFFRWAD (92 aa). A Tyr recombinase domain is found at 126-309; that stretch reads PLPRPLAADD…DAEHLLSVYE (184 aa). Active-site residues include Arg-169, Lys-193, His-261, Arg-264, and His-287. Tyr-296 serves as the catalytic O-(3'-phospho-DNA)-tyrosine intermediate.

This sequence belongs to the 'phage' integrase family. XerC subfamily. Forms a cyclic heterotetrameric complex composed of two molecules of XerC and two molecules of XerD.

It is found in the cytoplasm. Site-specific tyrosine recombinase, which acts by catalyzing the cutting and rejoining of the recombining DNA molecules. The XerC-XerD complex is essential to convert dimers of the bacterial chromosome into monomers to permit their segregation at cell division. It also contributes to the segregational stability of plasmids. This Rhodospirillum centenum (strain ATCC 51521 / SW) protein is Tyrosine recombinase XerC.